A 110-amino-acid polypeptide reads, in one-letter code: Large ribosomal subunit protein uL24 (110 aa).

This sequence belongs to the universal ribosomal protein uL24 family. Part of the 50S ribosomal subunit.

One of two assembly initiator proteins, it binds directly to the 5'-end of the 23S rRNA, where it nucleates assembly of the 50S subunit. In terms of biological role, one of the proteins that surrounds the polypeptide exit tunnel on the outside of the subunit. The protein is Large ribosomal subunit protein uL24 of Thermus thermophilus (strain ATCC BAA-163 / DSM 7039 / HB27).